Reading from the N-terminus, the 487-residue chain is GlcNAc-binding protein A (487 aa).

Residues 1–29 (MKKLPNKSLIALALLSVSGASFGHGYVSA) form the signal peptide. The Chitin-binding type-4 domain occupies 30 to 201 (YENGVAEGRA…SFYNVIDVKF (172 aa)). One can recognise a Chitin-binding type-3 domain in the interval 438–479 (AGTKVLASDGAVYQCKEFPFSGYCTQWSPSATQFEPGKGSHW).

The protein belongs to the GbpA family.

The protein localises to the secreted. In terms of biological role, probably interacts with GlcNAc residues. May promote attachment to both epithelial cell surfaces and chitin. This chain is GlcNAc-binding protein A, found in Vibrio campbellii (strain ATCC BAA-1116).